The chain runs to 591 residues: Lipoprotein LpqB (591 aa).

The N-terminal stretch at 1–20 (MTLRPSRRAVLSAAAVLLTG) is a signal peptide. Cys21 is lipidated: N-palmitoyl cysteine. Residue Cys21 is the site of S-diacylglycerol cysteine attachment.

This sequence belongs to the LpqB lipoprotein family.

The protein localises to the cell membrane. This is Lipoprotein LpqB from Cutibacterium acnes (strain DSM 16379 / KPA171202) (Propionibacterium acnes).